The sequence spans 503 residues: Transmembrane protein 184C (503 aa).

A run of 7 helical transmembrane segments spans residues 17–37 (LLIL…IWEF), 48–68 (VWFI…CGIL), 83–103 (IIRI…ALKY), 115–135 (ECYE…YLTI), 212–232 (YLVI…LLFY), 254–274 (VVFV…VGVI), and 287–307 (AVAT…AAIA). 2 disordered regions span residues 358 to 391 (PKKK…SPVG) and 479 to 503 (SPKP…STDS). The span at 373-388 (SSLLSASSQDSSKPSS) shows a compositional bias: low complexity. Residues 494–503 (PEGSDSSTDS) show a composition bias toward polar residues.

It belongs to the TMEM184 family.

The protein resides in the membrane. Its function is as follows. Possible tumor suppressor which may play a role in cell growth. This is Transmembrane protein 184C (Tmem184c) from Rattus norvegicus (Rat).